The following is a 372-amino-acid chain: uncharacterized protein (372 aa).

The signal sequence occupies residues 1–33 (MVRRALRLAAGTASLAAGTWLLRALHGTPAALG).

To K.pneumoniae RomA.

This is an uncharacterized protein from Mycobacterium bovis (strain ATCC BAA-935 / AF2122/97).